Here is a 496-residue protein sequence, read N- to C-terminus: Aspartyl/glutamyl-tRNA(Asn/Gln) amidotransferase subunit B (496 aa).

Belongs to the GatB/GatE family. GatB subfamily. As to quaternary structure, heterotrimer of A, B and C subunits.

The catalysed reaction is L-glutamyl-tRNA(Gln) + L-glutamine + ATP + H2O = L-glutaminyl-tRNA(Gln) + L-glutamate + ADP + phosphate + H(+). It catalyses the reaction L-aspartyl-tRNA(Asn) + L-glutamine + ATP + H2O = L-asparaginyl-tRNA(Asn) + L-glutamate + ADP + phosphate + 2 H(+). In terms of biological role, allows the formation of correctly charged Asn-tRNA(Asn) or Gln-tRNA(Gln) through the transamidation of misacylated Asp-tRNA(Asn) or Glu-tRNA(Gln) in organisms which lack either or both of asparaginyl-tRNA or glutaminyl-tRNA synthetases. The reaction takes place in the presence of glutamine and ATP through an activated phospho-Asp-tRNA(Asn) or phospho-Glu-tRNA(Gln). The polypeptide is Aspartyl/glutamyl-tRNA(Asn/Gln) amidotransferase subunit B (Natronomonas pharaonis (strain ATCC 35678 / DSM 2160 / CIP 103997 / JCM 8858 / NBRC 14720 / NCIMB 2260 / Gabara) (Halobacterium pharaonis)).